Consider the following 91-residue polypeptide: MANKQDLIAKVAEATELTKKDSAAAVDAVFSAVSSYLAKGEKVQLIGFGNFEVRERAARKGRNPQTGEEIKIKASKVPAFKAGKALKDAVK.

The protein belongs to the bacterial histone-like protein family.

In terms of biological role, histone-like DNA-binding protein which is capable of wrapping DNA to stabilize it, and thus to prevent its denaturation under extreme environmental conditions. Also seems to act as a fortuitous virulence factor in delayed sequelae by binding to heparan sulfate-proteoglycans in the extracellular matrix of target organs and acting as a nidus for in situ immune complex formation. The sequence is that of DNA-binding protein HU (hup) from Streptococcus mutans serotype c (strain ATCC 700610 / UA159).